The sequence spans 319 residues: Putative protein phosphatase 2C 23 (319 aa).

Residues 73–314 form the PPM-type phosphatase domain; it reads AVRMESASCY…DDITVVVACI (242 aa). Residues Gly102, Asp235, and Asp305 each contribute to the Mn(2+) site.

The protein belongs to the PP2C family. Mg(2+) is required as a cofactor.

The catalysed reaction is O-phospho-L-seryl-[protein] + H2O = L-seryl-[protein] + phosphate. It catalyses the reaction O-phospho-L-threonyl-[protein] + H2O = L-threonyl-[protein] + phosphate. This chain is Putative protein phosphatase 2C 23, found in Oryza sativa subsp. japonica (Rice).